Consider the following 230-residue polypeptide: Flagellar L-ring protein (230 aa).

The first 15 residues, 1–15 (MSRLPSLSRPCLAIA), serve as a signal peptide directing secretion. The N-palmitoyl cysteine moiety is linked to residue Cys-16. A lipid anchor (S-diacylglycerol cysteine) is attached at Cys-16.

It belongs to the FlgH family. The basal body constitutes a major portion of the flagellar organelle and consists of four rings (L,P,S, and M) mounted on a central rod.

It localises to the cell outer membrane. The protein resides in the bacterial flagellum basal body. Its function is as follows. Assembles around the rod to form the L-ring and probably protects the motor/basal body from shearing forces during rotation. In Xanthomonas axonopodis pv. citri (strain 306), this protein is Flagellar L-ring protein.